The primary structure comprises 156 residues: Phosphopantetheine adenylyltransferase (156 aa).

Residue threonine 10 participates in substrate binding. Residues threonine 10–phenylalanine 11 and histidine 18 each bind ATP. Substrate-binding residues include lysine 42, leucine 74, and arginine 88. Residues glycine 89–arginine 91, glutamate 99, and asparagine 124–serine 130 each bind ATP.

It belongs to the bacterial CoaD family. In terms of assembly, homohexamer. Mg(2+) serves as cofactor.

Its subcellular location is the cytoplasm. It carries out the reaction (R)-4'-phosphopantetheine + ATP + H(+) = 3'-dephospho-CoA + diphosphate. It functions in the pathway cofactor biosynthesis; coenzyme A biosynthesis; CoA from (R)-pantothenate: step 4/5. Functionally, reversibly transfers an adenylyl group from ATP to 4'-phosphopantetheine, yielding dephospho-CoA (dPCoA) and pyrophosphate. This is Phosphopantetheine adenylyltransferase from Campylobacter concisus (strain 13826).